The sequence spans 66 residues: MAFLKKSLFLVLFLGLVSLSICEEEKRETEEEENDQEEDDKSEEKRFLSLLPSLVSGAVSLVKILG.

The signal sequence occupies residues 1 to 22 (MAFLKKSLFLVLFLGLVSLSIC). Positions 23 to 44 (EEEKRETEEEENDQEEDDKSEE) are excised as a propeptide. Residues 25 to 44 (EKRETEEEENDQEEDDKSEE) form a disordered region. Over residues 30-41 (EEEENDQEEDDK) the composition is skewed to acidic residues. Residue Leu65 is modified to Leucine amide.

Expressed by the skin glands.

The protein localises to the secreted. In terms of biological role, has antimicrobial activity. The polypeptide is Phylloseptin-H7 (Pithecopus hypochondrialis (Orange-legged leaf frog)).